The following is a 123-amino-acid chain: MADLAKIEEQLSSLTLMQAAELVKMLEEKWGVSAAAPVAVAAAAAPAAEAAAEKTDFEVVLASSGDKKVEVIKVVKEITGLGLIEAKKLVDEAPKPIKSNVKKAEAEEIKSKLEAAGAKVELK.

Belongs to the bacterial ribosomal protein bL12 family. As to quaternary structure, homodimer. Part of the ribosomal stalk of the 50S ribosomal subunit. Forms a multimeric L10(L12)X complex, where L10 forms an elongated spine to which 2 to 4 L12 dimers bind in a sequential fashion. Binds GTP-bound translation factors.

Its function is as follows. Forms part of the ribosomal stalk which helps the ribosome interact with GTP-bound translation factors. Is thus essential for accurate translation. This chain is Large ribosomal subunit protein bL12, found in Rickettsia bellii (strain OSU 85-389).